Reading from the N-terminus, the 510-residue chain is 2,3-bisphosphoglycerate-independent phosphoglycerate mutase (510 aa).

The Mn(2+) site is built by Asp-12 and Ser-62. Residue Ser-62 is the Phosphoserine intermediate of the active site. Residues His-123, 153–154, Arg-185, Arg-191, 260–263, and Lys-335 contribute to the substrate site; these read RD and RPDR. Residues Asp-402, His-406, Asp-443, His-444, and His-461 each contribute to the Mn(2+) site.

The protein belongs to the BPG-independent phosphoglycerate mutase family. As to quaternary structure, monomer. Mn(2+) is required as a cofactor.

It carries out the reaction (2R)-2-phosphoglycerate = (2R)-3-phosphoglycerate. It functions in the pathway carbohydrate degradation; glycolysis; pyruvate from D-glyceraldehyde 3-phosphate: step 3/5. In terms of biological role, catalyzes the interconversion of 2-phosphoglycerate and 3-phosphoglycerate. In Listeria monocytogenes serotype 4b (strain F2365), this protein is 2,3-bisphosphoglycerate-independent phosphoglycerate mutase.